Here is a 410-residue protein sequence, read N- to C-terminus: Elongation factor Tu (410 aa).

Residues lysine 10–valine 219 enclose the tr-type G domain. GTP-binding positions include glycine 19–threonine 26, aspartate 88–histidine 92, and asparagine 143–aspartate 146. Threonine 26 contacts Mg(2+).

The protein belongs to the TRAFAC class translation factor GTPase superfamily. Classic translation factor GTPase family. EF-Tu/EF-1A subfamily. Monomer.

It localises to the cytoplasm. It carries out the reaction GTP + H2O = GDP + phosphate + H(+). Its function is as follows. GTP hydrolase that promotes the GTP-dependent binding of aminoacyl-tRNA to the A-site of ribosomes during protein biosynthesis. This Brachyspira hyodysenteriae (Treponema hyodysenteriae) protein is Elongation factor Tu.